Consider the following 220-residue polypeptide: MIKALIFDFDGLILDTETHEYEVLQEIFEEHGSVLPLSVWGKVIGTAAGFRPFEYLEEQIGKKLNHEELTQLRRERFAKRMESEKARPGVEAYLNAAKDLGLKIGLASSSDYKWVSGHLKQIGLFDDFEVIQTADDVEEVKPNPELYLLAAKNLGVSPAECLAFEDSVNGSIAAKRAGMKCVIVPNKVTGTLMFEDYDHRLESMAEMELALLLDHLNSQN.

The active-site Nucleophile is aspartate 8. The a divalent metal cation site is built by aspartate 8, aspartate 10, and aspartate 166. Aspartate 10 serves as the catalytic Proton donor.

This sequence belongs to the HAD-like hydrolase superfamily. CbbY/CbbZ/Gph/YieH family. It depends on a divalent metal cation as a cofactor.

The chain is Putative phosphatase YhcW (yhcW) from Bacillus subtilis (strain 168).